The following is a 334-amino-acid chain: MSEFLTPERTVYDSGVQFLRPKSLDEFIGQENVKKKLSLALEAAKMRGEVLDHVLLAGPPGLGKTTLAHIIASELQTNIHVTSGPVLVKQGDMAAILTSLERGDVLFIDEIHRLNKAVEELLYSAIEDFQIDIMIGKGPSAKSIRIDIQPFTLVGATTRSGLLSSPLRSRFGIILELDFYTVKELKEIIKRAASLMDVEIEDAAAEMIAKRSRGTPRIAIRLTKRVRDMLTVVKADRINTDIVLKTMEVLNIDDEGLDEFDRKILKTIIEIYRGGPVGLNALAASLGVEADTLSEVYEPYLLQAGFLARTPRGRIVTEKAYKHLKYEVPENRLF.

A large ATPase domain (RuvB-L) region spans residues 1 to 181; the sequence is MSEFLTPERT…GIILELDFYT (181 aa). Positions 19 and 20 each coordinate ADP. 3 residues coordinate ATP: E26, F27, and I28. Positions 27, 28, 61, 62, 63, 64, 65, and 66 each coordinate ADP. Residues L62 and G63 each coordinate ATP. ATP-binding positions include 127-129 and R170; that span reads EDF. ADP-binding residues include Y180, P216, and R217. A small ATPAse domain (RuvB-S) region spans residues 182-255; the sequence is VKELKEIIKR…TMEVLNIDDE (74 aa). Residue P216 participates in ATP binding. The head domain (RuvB-H) stretch occupies residues 256–334; sequence GLDEFDRKIL…KYEVPENRLF (79 aa). Residues R309 and R314 each contribute to the DNA site.

The protein belongs to the RuvB family. Homohexamer. Forms an RuvA(8)-RuvB(12)-Holliday junction (HJ) complex. HJ DNA is sandwiched between 2 RuvA tetramers; dsDNA enters through RuvA and exits via RuvB. An RuvB hexamer assembles on each DNA strand where it exits the tetramer. Each RuvB hexamer is contacted by two RuvA subunits (via domain III) on 2 adjacent RuvB subunits; this complex drives branch migration. In the full resolvosome a probable DNA-RuvA(4)-RuvB(12)-RuvC(2) complex forms which resolves the HJ.

The protein resides in the cytoplasm. It catalyses the reaction ATP + H2O = ADP + phosphate + H(+). In terms of biological role, the RuvA-RuvB-RuvC complex processes Holliday junction (HJ) DNA during genetic recombination and DNA repair, while the RuvA-RuvB complex plays an important role in the rescue of blocked DNA replication forks via replication fork reversal (RFR). RuvA specifically binds to HJ cruciform DNA, conferring on it an open structure. The RuvB hexamer acts as an ATP-dependent pump, pulling dsDNA into and through the RuvAB complex. RuvB forms 2 homohexamers on either side of HJ DNA bound by 1 or 2 RuvA tetramers; 4 subunits per hexamer contact DNA at a time. Coordinated motions by a converter formed by DNA-disengaged RuvB subunits stimulates ATP hydrolysis and nucleotide exchange. Immobilization of the converter enables RuvB to convert the ATP-contained energy into a lever motion, pulling 2 nucleotides of DNA out of the RuvA tetramer per ATP hydrolyzed, thus driving DNA branch migration. The RuvB motors rotate together with the DNA substrate, which together with the progressing nucleotide cycle form the mechanistic basis for DNA recombination by continuous HJ branch migration. Branch migration allows RuvC to scan DNA until it finds its consensus sequence, where it cleaves and resolves cruciform DNA. Its function is as follows. Promotes Holliday junction (HJ) branch migration in conjunction with RuvA. Subunits can be free, ADP- or ATP-bound; nucleotide binding changes during the reaction cycle. Has a DNA-dependent ATPase activity; dsDNA and supercoiled DNA but not ssDNA stimulate activity. This Thermotoga maritima (strain ATCC 43589 / DSM 3109 / JCM 10099 / NBRC 100826 / MSB8) protein is Holliday junction branch migration complex subunit RuvB.